The primary structure comprises 126 residues: Aspartate 1-decarboxylase (126 aa).

The active-site Schiff-base intermediate with substrate; via pyruvic acid is serine 25. The residue at position 25 (serine 25) is a Pyruvic acid (Ser). Position 57 (threonine 57) interacts with substrate. Residue tyrosine 58 is the Proton donor of the active site. 73–75 (GAA) provides a ligand contact to substrate.

The protein belongs to the PanD family. As to quaternary structure, heterooctamer of four alpha and four beta subunits. It depends on pyruvate as a cofactor. Post-translationally, is synthesized initially as an inactive proenzyme, which is activated by self-cleavage at a specific serine bond to produce a beta-subunit with a hydroxyl group at its C-terminus and an alpha-subunit with a pyruvoyl group at its N-terminus.

The protein localises to the cytoplasm. The catalysed reaction is L-aspartate + H(+) = beta-alanine + CO2. It participates in cofactor biosynthesis; (R)-pantothenate biosynthesis; beta-alanine from L-aspartate: step 1/1. Catalyzes the pyruvoyl-dependent decarboxylation of aspartate to produce beta-alanine. The sequence is that of Aspartate 1-decarboxylase from Pseudomonas fluorescens.